The chain runs to 95 residues: MSRSVKKGPYVQESLLKKINELNKKGEKKVIKTWSRSSTIFPQMIGHTIAVHDGRKHVPVYISEDMVGHKLGEFALTRTYRGHVNKTEKTTRVSR.

This sequence belongs to the universal ribosomal protein uS19 family.

Protein S19 forms a complex with S13 that binds strongly to the 16S ribosomal RNA. The sequence is that of Small ribosomal subunit protein uS19 from Clostridium kluyveri (strain NBRC 12016).